The following is a 256-amino-acid chain: Undecaprenyl-diphosphatase (256 aa).

7 helical membrane-spanning segments follow: residues Pro-39–Val-59, Arg-77–Phe-97, Phe-101–Met-121, Ile-135–Val-155, Leu-176–Leu-196, Leu-206–Leu-226, and Val-233–Pro-253.

It belongs to the UppP family.

Its subcellular location is the cell membrane. It carries out the reaction di-trans,octa-cis-undecaprenyl diphosphate + H2O = di-trans,octa-cis-undecaprenyl phosphate + phosphate + H(+). In terms of biological role, catalyzes the dephosphorylation of undecaprenyl diphosphate (UPP). The chain is Undecaprenyl-diphosphatase from Methanothrix thermoacetophila (strain DSM 6194 / JCM 14653 / NBRC 101360 / PT) (Methanosaeta thermophila).